The following is a 158-amino-acid chain: MYLLNDKVAHELKKPFGKVYKELPSIEGKVVSIGDVTTKHLLSNGIIPNLSILDFKTKRNIPVNIPHKFKTIFEVENPQGCISDEAIERIKYLSTIHDRDMALIIKGEEDLLTIPVIKYFPEDTSVIYGQPDEGMVLLKITDELKQKIEKLLKDMEER.

6 residues coordinate GTP: Asp-35, Val-36, Asp-54, Lys-56, Glu-109, and Asp-132.

Belongs to the GTP-dependent DPCK family.

The enzyme catalyses 3'-dephospho-CoA + GTP = GDP + CoA + H(+). It functions in the pathway cofactor biosynthesis; coenzyme A biosynthesis. Catalyzes the GTP-dependent phosphorylation of the 3'-hydroxyl group of dephosphocoenzyme A to form coenzyme A (CoA). This chain is GTP-dependent dephospho-CoA kinase, found in Methanococcus maripaludis (strain C5 / ATCC BAA-1333).